The following is a 383-amino-acid chain: E3 ubiquitin-protein ligase Os04g0590900 (383 aa).

Residues 53 to 73 (PVFSPLVIAIIGVLASAFLLV) form a helical membrane-spanning segment. The tract at residues 105 to 129 (GGAGSGGRHGHGQSRSHESWNVSPP) is disordered. The RING-type; atypical zinc finger occupies 157-199 (CSVCLGEFSDGESLRLLPRCSHAFHQQCIDTWLKSHSNCPLCR). Disordered regions lie at residues 269–291 (EANG…SSFD) and 320–383 (LLAG…DHPM).

It localises to the membrane. It carries out the reaction S-ubiquitinyl-[E2 ubiquitin-conjugating enzyme]-L-cysteine + [acceptor protein]-L-lysine = [E2 ubiquitin-conjugating enzyme]-L-cysteine + N(6)-ubiquitinyl-[acceptor protein]-L-lysine.. It functions in the pathway protein modification; protein ubiquitination. Possesses E3 ubiquitin-protein ligase in vitro. This Oryza sativa subsp. japonica (Rice) protein is E3 ubiquitin-protein ligase Os04g0590900.